The primary structure comprises 361 residues: Blue-sensitive opsin (361 aa).

Topologically, residues 1 to 43 are extracellular; that stretch reads MHPPRPTTDLPEDFYIPMALDAPNITALSPFLVPQTHLGSPGL. The N-linked (GlcNAc...) asparagine glycan is linked to asparagine 24. The chain crosses the membrane as a helical span at residues 44–68; that stretch reads FRAMAAFMFLLIALGVPINTLTIFC. Residues 69 to 80 lie on the Cytoplasmic side of the membrane; that stretch reads TARFRKLRSHLN. A helical membrane pass occupies residues 81–106; the sequence is YILVNLALANLLVILVGSTTACYSFS. The Extracellular segment spans residues 107-120; it reads QMYFALGPTACKIE. Cysteine 117 and cysteine 194 are joined by a disulfide. The helical transmembrane segment at 121–140 threads the bilayer; sequence GFAATLGGMVSLWSLAVVAF. Residues 141–159 lie on the Cytoplasmic side of the membrane; that stretch reads ERFLVICKPLGNFTFRGSH. A helical membrane pass occupies residues 160 to 183; it reads AVLGCVATWVLGFVASAPPLFGWS. The Extracellular segment spans residues 184–209; it reads RYIPEGLQCSCGPDWYTTDNKWHNES. A helical transmembrane segment spans residues 210–237; that stretch reads YVLFLFTFCFGVPLAIIVFSYGRLLITL. At 238–259 the chain is on the cytoplasmic side; it reads RAVARQQEQSATTQKADREVTK. A helical transmembrane segment spans residues 260–283; sequence MVVVMVLGFLVCWAPYTAFALWVV. At 284–291 the chain is on the extracellular side; the sequence is THRGRSFE. Residues 292–316 traverse the membrane as a helical segment; it reads VGLASIPSVFSKSSTVYNPVIYVLM. Lysine 303 bears the N6-(retinylidene)lysine mark. Over 317–361 the chain is Cytoplasmic; sequence NKQFRSCMLKLLFCGRSPFGDDEDVSGSSQATQVSSVSSSHVAPA. The interval 338–361 is disordered; sequence DEDVSGSSQATQVSSVSSSHVAPA. Residues 342 to 361 show a composition bias toward low complexity; the sequence is SGSSQATQVSSVSSSHVAPA.

It belongs to the G-protein coupled receptor 1 family. Opsin subfamily. Phosphorylated on some or all of the serine and threonine residues present in the C-terminal region. As to expression, the color pigments are found in the cone photoreceptor cells.

It localises to the membrane. Functionally, visual pigments are the light-absorbing molecules that mediate vision. They consist of an apoprotein, opsin, covalently linked to cis-retinal. The sequence is that of Blue-sensitive opsin from Gallus gallus (Chicken).